The primary structure comprises 178 residues: Germinal center-associated signaling and motility protein (178 aa).

Ser99 is modified (phosphoserine). At Tyr148 the chain carries Phosphotyrosine.

Interacts with ACTB and MYH2; the interaction with MYH2 is increased by IL6-induced phosphorylation. Interacts (via C-terminus) with ARHGEF11 (via DH domain). Interacts with ARHGEF12. Interacts with SYK; the interaction increases after B-cell receptor stimulation, resulting in enhanced SYK autophosphorylation and activity. Post-translationally, phosphorylation on tyrosine residues can be induced by IL6. Phosphorylation is mediated by LYN. Targeted by the ubiquitin E3 ligase subunit FBXO10 to mediate its ubiquitination and degradation. In terms of tissue distribution, expressed in diffuse large B-cell lymphoma (DLBCL) and several germinal center (GC)-like lymphoma cell lines (at protein level). Highly expressed in normal GC lymphocytes and GC-derived malignancies. Expressed in thymus and spleen.

It is found in the cytoplasm. It localises to the cell membrane. Functionally, involved in the negative regulation of lymphocyte motility. It mediates the migration-inhibitory effects of IL6. Serves as a positive regulator of the RhoA signaling pathway. Enhancement of RhoA activation results in inhibition of lymphocyte and lymphoma cell motility by activation of its downstream effector ROCK. Is a regulator of B-cell receptor signaling, that acts through SYK kinase activation. The protein is Germinal center-associated signaling and motility protein (GCSAM) of Homo sapiens (Human).